The sequence spans 111 residues: MNSCTLLVQILSCKSIRISENKSQIIKLKARLLKRKRLVIINLTIWNKKSSYTFKQLKKLDYVIIEGKLHRNNKIFTNKTKQVGKDLVFSTSRIFKYKSLLKNKDIDLFIK.

Residues 1-98 (MNSCTLLVQI…FSTSRIFKYK (98 aa)) enclose the SSB domain.

The protein localises to the plastid. It localises to the chloroplast. This Pyropia yezoensis (Susabi-nori) protein is Putative single-stranded DNA-binding protein ycf41 (ycf41).